Here is a 100-residue protein sequence, read N- to C-terminus: Small ribosomal subunit protein uS14 (100 aa).

The protein belongs to the universal ribosomal protein uS14 family. As to quaternary structure, part of the 30S ribosomal subunit. Contacts proteins S3 and S10.

Binds 16S rRNA, required for the assembly of 30S particles and may also be responsible for determining the conformation of the 16S rRNA at the A site. The sequence is that of Small ribosomal subunit protein uS14 from Prochlorococcus marinus (strain MIT 9211).